The chain runs to 84 residues: MGIIAWIIFDLIAGIIAKLIMPGRDGGGFFLTCILGIVGAVVGGWLATMFGIGGSISGFNLHSFLVAVVGAILVLGIFRLLRRE.

3 helical membrane passes run 1-21, 27-47, and 58-78; these read MGII…KLIM, GGFF…GWLA, and GFNL…LGIF.

Belongs to the UPF0410 family.

Its subcellular location is the cell inner membrane. This is UPF0410 protein YmgE (ymgE) from Escherichia coli (strain K12).